The following is a 140-amino-acid chain: uncharacterized protein (140 aa).

The tract at residues 121–140 (EEVKNGELIDPNVTTEDEKL) is disordered.

This is an uncharacterized protein from Schizosaccharomyces pombe (strain 972 / ATCC 24843) (Fission yeast).